The primary structure comprises 80 residues: Cell division activator CedA (80 aa).

The protein belongs to the CedA family.

Activates the cell division inhibited by chromosomal DNA over-replication. This Escherichia coli (strain SMS-3-5 / SECEC) protein is Cell division activator CedA.